The following is a 494-amino-acid chain: Glutamyl-tRNA(Gln) amidotransferase subunit A (494 aa).

Active-site charge relay system residues include lysine 81 and serine 156. The Acyl-ester intermediate role is filled by serine 180.

It belongs to the amidase family. GatA subfamily. In terms of assembly, heterotrimer of A, B and C subunits.

It carries out the reaction L-glutamyl-tRNA(Gln) + L-glutamine + ATP + H2O = L-glutaminyl-tRNA(Gln) + L-glutamate + ADP + phosphate + H(+). Allows the formation of correctly charged Gln-tRNA(Gln) through the transamidation of misacylated Glu-tRNA(Gln) in organisms which lack glutaminyl-tRNA synthetase. The reaction takes place in the presence of glutamine and ATP through an activated gamma-phospho-Glu-tRNA(Gln). This Mycolicibacterium gilvum (strain PYR-GCK) (Mycobacterium gilvum (strain PYR-GCK)) protein is Glutamyl-tRNA(Gln) amidotransferase subunit A.